We begin with the raw amino-acid sequence, 450 residues long: Glucose-6-phosphate isomerase (450 aa).

A Phosphothreonine modification is found at Thr39. Residue Glu291 is the Proton donor of the active site. Active-site residues include His312 and Lys426.

The protein belongs to the GPI family.

The protein resides in the cytoplasm. It catalyses the reaction alpha-D-glucose 6-phosphate = beta-D-fructose 6-phosphate. Its pathway is carbohydrate biosynthesis; gluconeogenesis. It functions in the pathway carbohydrate degradation; glycolysis; D-glyceraldehyde 3-phosphate and glycerone phosphate from D-glucose: step 2/4. Its function is as follows. Catalyzes the reversible isomerization of glucose-6-phosphate to fructose-6-phosphate. In Bacillus cytotoxicus (strain DSM 22905 / CIP 110041 / 391-98 / NVH 391-98), this protein is Glucose-6-phosphate isomerase.